A 72-amino-acid polypeptide reads, in one-letter code: NAD(P)H-quinone oxidoreductase subunit O (72 aa).

It belongs to the complex I NdhO subunit family. As to quaternary structure, NDH-1 can be composed of about 15 different subunits; different subcomplexes with different compositions have been identified which probably have different functions.

It localises to the cellular thylakoid membrane. The enzyme catalyses a plastoquinone + NADH + (n+1) H(+)(in) = a plastoquinol + NAD(+) + n H(+)(out). The catalysed reaction is a plastoquinone + NADPH + (n+1) H(+)(in) = a plastoquinol + NADP(+) + n H(+)(out). Its function is as follows. NDH-1 shuttles electrons from an unknown electron donor, via FMN and iron-sulfur (Fe-S) centers, to quinones in the respiratory and/or the photosynthetic chain. The immediate electron acceptor for the enzyme in this species is believed to be plastoquinone. Couples the redox reaction to proton translocation, and thus conserves the redox energy in a proton gradient. Cyanobacterial NDH-1 also plays a role in inorganic carbon-concentration. This Crocosphaera subtropica (strain ATCC 51142 / BH68) (Cyanothece sp. (strain ATCC 51142)) protein is NAD(P)H-quinone oxidoreductase subunit O.